The chain runs to 451 residues: F-box/kelch-repeat protein At1g74510 (451 aa).

Residues 93–139 (SSPVTRLDQNALLNCLAHCSLSDFGSIASTNRTFRSLIKDSELYRLR) form the F-box domain. Kelch repeat units lie at residues 137 to 188 (RLRR…KESL), 193 to 236 (ELLV…SLGE), 237 to 284 (IAVI…FMDG), 286 to 333 (FYCI…DQAK), and 349 to 395 (AVVK…GMAF).

The protein is F-box/kelch-repeat protein At1g74510 of Arabidopsis thaliana (Mouse-ear cress).